Consider the following 390-residue polypeptide: MMNRVILFIMDSVGIGALPDAEQFGDLGANTLGNIALQENGIDLPNLQKLGLGNIDGIVGIEPVESPLGAFGKSLEVSNGKDTTTGHWEIAGIHLKEPFKTFPNGFPEDVINEIERKIGRKTLGNKAASGTVILDELGEEHMRTGSPIIYTSADSVLQIAAHEEVISLDELYKICGIAREIMMGDNAVARIIARPFIGSVGNFSRTPNRRDFSLDPSGDTVLDIAKREGFDVIAVGKIEDIFNGRGITEAVHTVDNMDGINKTIEYIEKQNKGIIFTNLVDFDSMYGHRRDPKGYKRALEDLDKRIPEILESMRDDDIIIFTADHGNDPTYKGSDHTREYIPLVIYGKKVKANTNIGIRKSFADIAATISDILEIPSTNKGESFKNSIIK.

Residues aspartate 11, aspartate 283, histidine 288, aspartate 324, histidine 325, and histidine 336 each contribute to the Mn(2+) site.

Belongs to the phosphopentomutase family. It depends on Mn(2+) as a cofactor.

The protein resides in the cytoplasm. The enzyme catalyses 2-deoxy-alpha-D-ribose 1-phosphate = 2-deoxy-D-ribose 5-phosphate. The catalysed reaction is alpha-D-ribose 1-phosphate = D-ribose 5-phosphate. Its pathway is carbohydrate degradation; 2-deoxy-D-ribose 1-phosphate degradation; D-glyceraldehyde 3-phosphate and acetaldehyde from 2-deoxy-alpha-D-ribose 1-phosphate: step 1/2. Isomerase that catalyzes the conversion of deoxy-ribose 1-phosphate (dRib-1-P) and ribose 1-phosphate (Rib-1-P) to deoxy-ribose 5-phosphate (dRib-5-P) and ribose 5-phosphate (Rib-5-P), respectively. The chain is Phosphopentomutase from Alkaliphilus oremlandii (strain OhILAs) (Clostridium oremlandii (strain OhILAs)).